The chain runs to 131 residues: Fluoride-specific ion channel FluC (131 aa).

A run of 3 helical transmembrane segments spans residues 3–23, 34–54, and 62–82; these read AAAN…GAWL, IFLT…LLMG, and AVPA…LGGL. Na(+) contacts are provided by G80 and T83. The helical transmembrane segment at 101-121 threads the bilayer; the sequence is WGWLALHAAVHVAGSLLMAWI.

It belongs to the fluoride channel Fluc/FEX (TC 1.A.43) family.

It localises to the cell inner membrane. The enzyme catalyses fluoride(in) = fluoride(out). Its activity is regulated as follows. Na(+) is not transported, but it plays an essential structural role and its presence is essential for fluoride channel function. Functionally, fluoride-specific ion channel. Important for reducing fluoride concentration in the cell, thus reducing its toxicity. This is Fluoride-specific ion channel FluC from Aromatoleum aromaticum (strain DSM 19018 / LMG 30748 / EbN1) (Azoarcus sp. (strain EbN1)).